The chain runs to 38 residues: Photosystem II reaction center protein X (38 aa).

A helical transmembrane segment spans residues 8–28 (FLWSLVAGAVVLGALFGAIIF).

Belongs to the PsbX family. Type 1 subfamily. In terms of assembly, PSII is composed of 1 copy each of membrane proteins PsbA, PsbB, PsbC, PsbD, PsbE, PsbF, PsbH, PsbI, PsbJ, PsbK, PsbL, PsbM, PsbT, PsbX, PsbY, PsbZ, Psb30/Ycf12, peripheral proteins PsbO, CyanoQ (PsbQ), PsbU, PsbV and a large number of cofactors. It forms dimeric complexes.

The protein localises to the cellular thylakoid membrane. Its function is as follows. Involved in the binding and/or turnover of quinones at the Q(B) site of photosystem II (PSII). PSII is a light-driven water plastoquinone oxidoreductase, using light energy to abstract electrons from H(2)O, generating a proton gradient subsequently used for ATP formation. The polypeptide is Photosystem II reaction center protein X (Synechococcus sp. (strain JA-2-3B'a(2-13)) (Cyanobacteria bacterium Yellowstone B-Prime)).